The chain runs to 312 residues: Ornithine carbamoyltransferase (312 aa).

Carbamoyl phosphate-binding positions include 57–60 (STRT), glutamine 84, arginine 108, and 135–138 (HPCQ). L-ornithine is bound by residues asparagine 166, aspartate 226, and 230–231 (SM). Residues 265 to 266 (CL) and arginine 293 contribute to the carbamoyl phosphate site.

This sequence belongs to the aspartate/ornithine carbamoyltransferase superfamily. OTCase family.

It localises to the cytoplasm. The catalysed reaction is carbamoyl phosphate + L-ornithine = L-citrulline + phosphate + H(+). It functions in the pathway amino-acid biosynthesis; L-arginine biosynthesis; L-arginine from L-ornithine and carbamoyl phosphate: step 1/3. Functionally, reversibly catalyzes the transfer of the carbamoyl group from carbamoyl phosphate (CP) to the N(epsilon) atom of ornithine (ORN) to produce L-citrulline. The chain is Ornithine carbamoyltransferase from Brucella ovis (strain ATCC 25840 / 63/290 / NCTC 10512).